The following is a 203-amino-acid chain: V-type ATP synthase subunit D (203 aa).

It belongs to the V-ATPase D subunit family.

Functionally, produces ATP from ADP in the presence of a proton gradient across the membrane. The chain is V-type ATP synthase subunit D from Thermotoga neapolitana (strain ATCC 49049 / DSM 4359 / NBRC 107923 / NS-E).